Reading from the N-terminus, the 397-residue chain is Arginine biosynthesis bifunctional protein ArgJ (397 aa).

The substrate site is built by Thr-147, Lys-173, Thr-184, Glu-270, Asn-392, and Thr-397. Thr-184 serves as the catalytic Nucleophile.

It belongs to the ArgJ family. Heterotetramer of two alpha and two beta chains.

It localises to the cytoplasm. It catalyses the reaction N(2)-acetyl-L-ornithine + L-glutamate = N-acetyl-L-glutamate + L-ornithine. The catalysed reaction is L-glutamate + acetyl-CoA = N-acetyl-L-glutamate + CoA + H(+). It functions in the pathway amino-acid biosynthesis; L-arginine biosynthesis; L-ornithine and N-acetyl-L-glutamate from L-glutamate and N(2)-acetyl-L-ornithine (cyclic): step 1/1. It participates in amino-acid biosynthesis; L-arginine biosynthesis; N(2)-acetyl-L-ornithine from L-glutamate: step 1/4. In terms of biological role, catalyzes two activities which are involved in the cyclic version of arginine biosynthesis: the synthesis of N-acetylglutamate from glutamate and acetyl-CoA as the acetyl donor, and of ornithine by transacetylation between N(2)-acetylornithine and glutamate. The protein is Arginine biosynthesis bifunctional protein ArgJ of Staphylococcus epidermidis (strain ATCC 35984 / DSM 28319 / BCRC 17069 / CCUG 31568 / BM 3577 / RP62A).